A 145-amino-acid chain; its full sequence is SsrA-binding protein (145 aa).

The protein belongs to the SmpB family.

The protein localises to the cytoplasm. Functionally, required for rescue of stalled ribosomes mediated by trans-translation. Binds to transfer-messenger RNA (tmRNA), required for stable association of tmRNA with ribosomes. tmRNA and SmpB together mimic tRNA shape, replacing the anticodon stem-loop with SmpB. tmRNA is encoded by the ssrA gene; the 2 termini fold to resemble tRNA(Ala) and it encodes a 'tag peptide', a short internal open reading frame. During trans-translation Ala-aminoacylated tmRNA acts like a tRNA, entering the A-site of stalled ribosomes, displacing the stalled mRNA. The ribosome then switches to translate the ORF on the tmRNA; the nascent peptide is terminated with the 'tag peptide' encoded by the tmRNA and targeted for degradation. The ribosome is freed to recommence translation, which seems to be the essential function of trans-translation. In Mesomycoplasma hyopneumoniae (strain 232) (Mycoplasma hyopneumoniae), this protein is SsrA-binding protein.